The primary structure comprises 415 residues: uncharacterized protein (415 aa).

This is an uncharacterized protein from Methanocaldococcus jannaschii (strain ATCC 43067 / DSM 2661 / JAL-1 / JCM 10045 / NBRC 100440) (Methanococcus jannaschii).